We begin with the raw amino-acid sequence, 338 residues long: Fructose-1,6-bisphosphatase class 1 (338 aa).

Mg(2+) contacts are provided by Glu-92, Asp-114, Leu-116, and Asp-117. Substrate contacts are provided by residues 117-120 (DGSS), Asn-210, Tyr-243, and Lys-276. Mg(2+) is bound at residue Glu-282.

Belongs to the FBPase class 1 family. As to quaternary structure, homotetramer. Mg(2+) is required as a cofactor.

Its subcellular location is the cytoplasm. The catalysed reaction is beta-D-fructose 1,6-bisphosphate + H2O = beta-D-fructose 6-phosphate + phosphate. It participates in carbohydrate biosynthesis; gluconeogenesis. The sequence is that of Fructose-1,6-bisphosphatase class 1 from Maridesulfovibrio salexigens (strain ATCC 14822 / DSM 2638 / NCIMB 8403 / VKM B-1763) (Desulfovibrio salexigens).